Reading from the N-terminus, the 193-residue chain is Superoxide dismutase [Fe] (193 aa).

Fe cation is bound at residue H27. K51 is subject to N6-acetyllysine. Residues H74, D157, and H161 each contribute to the Fe cation site.

This sequence belongs to the iron/manganese superoxide dismutase family. In terms of assembly, homodimer. The cofactor is Fe cation.

It carries out the reaction 2 superoxide + 2 H(+) = H2O2 + O2. Destroys superoxide anion radicals which are normally produced within the cells and which are toxic to biological systems. This Escherichia coli O157:H7 protein is Superoxide dismutase [Fe] (sodB).